Here is a 772-residue protein sequence, read N- to C-terminus: Phenylalanine--tRNA ligase beta subunit (772 aa).

One can recognise a tRNA-binding domain in the interval Ile-40 to Phe-158. Residues Ser-397–Pro-468 enclose the B5 domain. Asp-446, Asp-452, Glu-455, and Asp-456 together coordinate Mg(2+). An FDX-ACB domain is found at Ser-691–Phe-772.

Belongs to the phenylalanyl-tRNA synthetase beta subunit family. Type 1 subfamily. As to quaternary structure, tetramer of two alpha and two beta subunits. Mg(2+) is required as a cofactor.

It localises to the cytoplasm. The enzyme catalyses tRNA(Phe) + L-phenylalanine + ATP = L-phenylalanyl-tRNA(Phe) + AMP + diphosphate + H(+). This Ureaplasma parvum serovar 3 (strain ATCC 700970) protein is Phenylalanine--tRNA ligase beta subunit (pheT).